The following is a 320-amino-acid chain: L-lactate dehydrogenase A (320 aa).

Residues R88, N120, and R151 each contribute to the substrate site. NAD(+) is bound at residue N120. The active-site Proton acceptor is H175.

The protein belongs to the LDH/MDH superfamily. LDH family. In terms of assembly, homotetramer.

It localises to the cytoplasm. It catalyses the reaction (S)-lactate + NAD(+) = pyruvate + NADH + H(+). Its pathway is fermentation; pyruvate fermentation to lactate; (S)-lactate from pyruvate: step 1/1. Functionally, converts pyruvate to lactate. The protein is L-lactate dehydrogenase A (LDHA) of Rhizopus oryzae (Mucormycosis agent).